The following is a 730-amino-acid chain: Guanylate cyclase soluble subunit alpha-2 (730 aa).

Residues 1–53 (MSRRKISSESFSSLGSDYLETSPEEEGECPLSKLCWNGSRSPPGPPGSRAAAM) form a disordered region. Residues 519–646 (TMLFSDIVGF…NNVTLASKFE (128 aa)) form the Guanylate cyclase domain.

The protein belongs to the adenylyl cyclase class-4/guanylyl cyclase family. As to quaternary structure, heterodimer of an alpha and a beta chain.

It localises to the cytoplasm. The catalysed reaction is GTP = 3',5'-cyclic GMP + diphosphate. Activated by nitric oxide in the presence of magnesium or manganese ions. Functionally, has guanylyl cyclase on binding to the beta-1 subunit. The sequence is that of Guanylate cyclase soluble subunit alpha-2 (Gucy1a2) from Rattus norvegicus (Rat).